Consider the following 254-residue polypeptide: Protein N-terminal and lysine N-methyltransferase EFM7 (254 aa).

Residues tryptophan 57, 84 to 86, aspartate 106, tryptophan 138, and serine 165 contribute to the S-adenosyl-L-methionine site; that span reads GAA.

It belongs to the class I-like SAM-binding methyltransferase superfamily. EFM7 family.

It is found in the cytoplasm. S-adenosyl-L-methionine-dependent protein methyltransferase that trimethylates the N-terminal glycine 'Gly-2' of elongation factor 1-alpha, before also catalyzing the mono- and dimethylation of 'Lys-3'. The protein is Protein N-terminal and lysine N-methyltransferase EFM7 of Debaryomyces hansenii (strain ATCC 36239 / CBS 767 / BCRC 21394 / JCM 1990 / NBRC 0083 / IGC 2968) (Yeast).